The primary structure comprises 122 residues: MARIVGVEIPNDKKVEIALTYIYGIGKTRAKQICEATNIDPNKRVRELGDEEISKIATFIQQNYKVEGELRTEVMQNIKRLIDIGCYRGLRHKLGLPVRGQKTKSNARTRKGPRPSRIKKKK.

Residues 97 to 122 (PVRGQKTKSNARTRKGPRPSRIKKKK) form a disordered region. The segment covering 101–122 (QKTKSNARTRKGPRPSRIKKKK) has biased composition (basic residues).

The protein belongs to the universal ribosomal protein uS13 family. As to quaternary structure, part of the 30S ribosomal subunit. Forms a loose heterodimer with protein S19. Forms two bridges to the 50S subunit in the 70S ribosome.

Located at the top of the head of the 30S subunit, it contacts several helices of the 16S rRNA. In the 70S ribosome it contacts the 23S rRNA (bridge B1a) and protein L5 of the 50S subunit (bridge B1b), connecting the 2 subunits; these bridges are implicated in subunit movement. Contacts the tRNAs in the A and P-sites. The sequence is that of Small ribosomal subunit protein uS13 from Thermosipho melanesiensis (strain DSM 12029 / CIP 104789 / BI429).